An 85-amino-acid polypeptide reads, in one-letter code: Probable small nuclear ribonucleoprotein G (85 aa).

Residues 6–78 (QADPDLTKLL…ILLMEPLESM (73 aa)) enclose the Sm domain.

This sequence belongs to the snRNP Sm proteins family. Core component of the spliceosomal U1, U2, U4 and U5 small nuclear ribonucleoproteins (snRNPs), the building blocks of the spliceosome. Most spliceosomal snRNPs contain a common set of Sm proteins, SNRPB, SNRPD1, SNRPD2, SNRPD3, SNRPE, SNRPF and SNRPG that assemble in a heptameric protein ring on the Sm site of the small nuclear RNA to form the core snRNP. Component of the U1 snRNP. Component of the U4/U6-U5 tri-snRNP complex. Component of the U7 snRNP complex. Component of the U11/U12 snRNPs that are part of the U12-type spliceosome.

It localises to the cytoplasm. The protein resides in the cytosol. Its subcellular location is the nucleus. Its function is as follows. Plays a role in pre-mRNA splicing as a core component of the spliceosomal U1, U2, U4 and U5 small nuclear ribonucleoproteins (snRNPs), the building blocks of the spliceosome. Component of both the pre-catalytic spliceosome B complex and activated spliceosome C complexes. Is also a component of the minor U12 spliceosome. The polypeptide is Probable small nuclear ribonucleoprotein G (snrpG) (Dictyostelium discoideum (Social amoeba)).